The sequence spans 287 residues: ATP synthase gamma chain (287 aa).

This sequence belongs to the ATPase gamma chain family. In terms of assembly, F-type ATPases have 2 components, CF(1) - the catalytic core - and CF(0) - the membrane proton channel. CF(1) has five subunits: alpha(3), beta(3), gamma(1), delta(1), epsilon(1). CF(0) has three main subunits: a, b and c.

The protein resides in the cell inner membrane. Its function is as follows. Produces ATP from ADP in the presence of a proton gradient across the membrane. The gamma chain is believed to be important in regulating ATPase activity and the flow of protons through the CF(0) complex. This chain is ATP synthase gamma chain, found in Salmonella paratyphi A (strain ATCC 9150 / SARB42).